The following is a 418-amino-acid chain: Protein YdhQ (418 aa).

The chain is Protein YdhQ (ydhQ) from Escherichia coli (strain K12).